The following is a 368-amino-acid chain: Methionine import ATP-binding protein MetN (368 aa).

Positions isoleucine 5–isoleucine 260 constitute an ABC transporter domain. Residue glycine 41–serine 48 participates in ATP binding.

Belongs to the ABC transporter superfamily. Methionine importer (TC 3.A.1.24) family. The complex is composed of two ATP-binding proteins (MetN), two transmembrane proteins (MetI) and a solute-binding protein (MetQ).

It localises to the cell membrane. It carries out the reaction L-methionine(out) + ATP + H2O = L-methionine(in) + ADP + phosphate + H(+). The catalysed reaction is D-methionine(out) + ATP + H2O = D-methionine(in) + ADP + phosphate + H(+). Part of the ABC transporter complex MetNIQ involved in methionine import. Responsible for energy coupling to the transport system. This is Methionine import ATP-binding protein MetN from Lactococcus lactis subsp. cremoris (strain MG1363).